Consider the following 397-residue polypeptide: Phosphoglycerate kinase (397 aa).

Substrate contacts are provided by residues 21-23 (DMN), arginine 36, 59-62 (HLGR), arginine 114, and arginine 147. Residues lysine 198, glutamate 320, and 346-349 (GGDT) each bind ATP.

The protein belongs to the phosphoglycerate kinase family. Monomer.

It localises to the cytoplasm. The catalysed reaction is (2R)-3-phosphoglycerate + ATP = (2R)-3-phospho-glyceroyl phosphate + ADP. Its pathway is carbohydrate degradation; glycolysis; pyruvate from D-glyceraldehyde 3-phosphate: step 2/5. In Neisseria gonorrhoeae (strain NCCP11945), this protein is Phosphoglycerate kinase.